We begin with the raw amino-acid sequence, 273 residues long: Thioredoxin-like 1-3, chloroplastic (273 aa).

A chloroplast-targeting transit peptide spans Met1–Ser44. One can recognise a Thioredoxin domain in the interval Leu62–Arg202. Residues Cys125 and Cys128 each act as nucleophile in the active site. A disulfide bridge links Cys125 with Cys128.

The protein belongs to the thioredoxin family.

It localises to the plastid. Its subcellular location is the chloroplast. In terms of biological role, probable thiol-disulfide oxidoreductase that may participate in various redox reactions. This Arabidopsis thaliana (Mouse-ear cress) protein is Thioredoxin-like 1-3, chloroplastic.